Consider the following 715-residue polypeptide: Eukaryotic peptide chain release factor GTP-binding subunit (715 aa).

Over residues 1-12 (MANASLNGDQSK) the composition is skewed to polar residues. Disordered stretches follow at residues 1–148 (MANA…SLNK) and 168–262 (ATKK…SNSA). The interval 5–128 (SLNGDQSKQQ…PQQQQQQQSQ (124 aa)) is several sort of repeats. Low complexity predominate over residues 13–25 (QQQQQQQQQQQQQ). A compositionally biased stretch (polar residues) spans 26-37 (NYYNPNAAQSFV). Composition is skewed to low complexity over residues 39 to 129 (QGGY…QSQG) and 176 to 198 (SKPQ…ASAP). Residues 129 to 285 (GMSLADFQKQ…DEIDEEVVKD (157 aa)) are charged. Basic and acidic residues-rich tracts occupy residues 199–208 (QEEKKEEKEA) and 218–233 (ETKK…KKEA). Residues 290 to 515 (KDHVSIIFMG…YLDNMDTMNR (226 aa)) form the tr-type G domain. The G1 stretch occupies residues 299-306 (GHVDAGKS). 299–306 (GHVDAGKS) contributes to the GTP binding site. The tract at residues 355-359 (GKTIE) is G2. The residue at position 373 (T373) is a Phosphothreonine. The tract at residues 376 to 379 (DAPG) is G3. GTP is bound by residues 376–380 (DAPGH) and 438–441 (NKMD). Residues 438–441 (NKMD) form a G4 region. The tract at residues 479 to 481 (SGY) is G5.

This sequence belongs to the TRAFAC class translation factor GTPase superfamily. Classic translation factor GTPase family. ERF3 subfamily.

It is found in the cytoplasm. Its function is as follows. Involved in translation termination. Stimulates the activity of ERF1. Binds guanine nucleotides. In Candida albicans (Yeast), this protein is Eukaryotic peptide chain release factor GTP-binding subunit (SUP35).